The sequence spans 178 residues: Vegetative protein (178 aa).

Disordered regions lie at residues 67–102 (AGRR…AAAG) and 138–158 (NRRP…DIKL). Residues 76-90 (PAARSAVTAAPAAVG) show a composition bias toward low complexity.

The chain is Vegetative protein (vegA) from Myxococcus xanthus.